The chain runs to 479 residues: Shugoshin (479 aa).

A coiled-coil region spans residues 36–76 (SLRIRSLESEVSNLLSENVSLREQIITLTQELERFEAARTL). Disordered regions lie at residues 109-145 (SRAV…GFLD), 220-247 (EHSL…QADT), and 263-479 (AKRK…SMPP). The span at 123-132 (QSRESGPKEV) shows a compositional bias: basic and acidic residues. Residues 270-286 (EDDESLFESSPSEDDEF) are compositionally biased toward acidic residues. Polar residues-rich tracts occupy residues 290 to 303 (RPAQ…QNEH) and 318 to 328 (QSPTLSSQNDH). 2 stretches are compositionally biased toward basic and acidic residues: residues 335-352 (PQSE…RVLE) and 379-388 (GYNEKSEKPL). Polar residues predominate over residues 400–411 (KNASPKKSSTRT).

The protein belongs to the shugoshin family.

The protein localises to the nucleus. It is found in the chromosome. Its subcellular location is the centromere. In terms of biological role, plays a central role in chromosome cohesion during cell division by preventing premature dissociation of cohesin complex from centromeres after prophase, when most of cohesin complex dissociates from chromosomes arms. The polypeptide is Shugoshin (sgo1) (Emericella nidulans (strain FGSC A4 / ATCC 38163 / CBS 112.46 / NRRL 194 / M139) (Aspergillus nidulans)).